The following is a 43-amino-acid chain: Snake venom metalloproteinase crotalin (43 aa).

Residues 1–43 enclose the Peptidase M12B domain; it reads LLRRKSHDHAQNHDGDKCLRGASLGYYQSFLNQYKPQCILNKP. Histidine 13 is a binding site for Zn(2+).

It belongs to the venom metalloproteinase (M12B) family. P-I subfamily. Monomer. Zn(2+) is required as a cofactor. In terms of processing, this protein autoproteolytically degrades to 10 kDa and 14 kDa fragments in the presence of SDS. Interestingly, the two fragments, as well as reduced crotalin are able to bind vWF, indicating that the binding activity does not require a specific protein conformation. As to expression, expressed by the venom gland.

Its subcellular location is the secreted. Functionally, snake venom zinc metalloproteinase that inhibits ristocin-induced platelet aggregation by abolishing the binding of von Willebrand factor (vWF) to platelet glycoprotein Ib alpha (GPIBA) through the cleavage of both GP1BA and vWF. Also has fibrinogenolytic activities by degrading the alpha- (FGA) and beta-chain (FGB) of fibrinogen. In vivo, induces a slight hemorrhage when applied to chick chorioallantoic membrane and has potent antithrombic effect. The protein is Snake venom metalloproteinase crotalin of Crotalus atrox (Western diamondback rattlesnake).